The primary structure comprises 315 residues: Eukaryotic translation initiation factor 2 subunit 1 (315 aa).

Residues 17 to 88 (EDVVMVNVRS…EKGYIDLSKR (72 aa)) form the S1 motif domain. Phosphoserine; by HRI is present on S49. At S52 the chain carries Phosphoserine. K141 carries the post-translational modification N6-acetyllysine. Phosphoserine is present on S158. Phosphothreonine is present on residues T279 and T281. The tract at residues 293 to 315 (LERENAEVDGDDDAEEMEAKAED) is disordered. Positions 299 to 308 (EVDGDDDAEE) are enriched in acidic residues.

The protein belongs to the eIF-2-alpha family. In terms of assembly, eukaryotic translation initiation factor 2 eIF2 is a heterotrimeric complex composed of an alpha (EIF2S1), a beta (EIF2S2) and a gamma (EIF2S3) chain. eIF2 is member of the 43S pre-initiation complex (43S PIC). eIF2 forms a complex with at least CELF1/CUGBP1, CALR, CALR3, EIF2S1, EIF2S2, HSP90B1 and HSPA5. Interaction with METAP2 protects EIF2S1 from inhibitory phosphorylation. Interacts with ABCF1. Associates with ribosomes. Interacts with DDX3X in an RNA-independent manner. In terms of processing, phosphorylation at Ser-49 and Ser-52 stabilizes the eIF-2/GDP/eIF2B complex and prevents GDP/GTP exchange reaction, thus impairing the recycling of eIF-2 between successive rounds of initiation and leading to global inhibition of translation, while concomitantly initiating the preferential translation of integrated stress response (ISR)-specific mRNAs. Substrate for at least 4 kinases: EIF2AK1/HRI, EIF2AK2/PKR, EIF2AK3/PERK and EIF2AK4/GCN2. Phosphorylation on Ser-52 by the EIF2AK4/GCN2 protein kinase occurs in response to amino acid starvation and UV irradiation. Phosphorylation at Ser-52 by the EIF2AK3/PERK protein kinase occurs in response to the unfolded protein response. Phosphorylation at Ser-52 by EIF2AK1/HRI in response to mitochondrial damage promotes relocalization to the mitochondrial surface.

It localises to the cytoplasm. It is found in the stress granule. The protein localises to the cytosol. Its subcellular location is the mitochondrion. Its activity is regulated as follows. Activity is regulated by phosphorylation at Ser-49 and Ser-52, which stabilizes the eIF2/GDP/eIF2B complex and prevents the eIF2B-mediated exchange of GDP for GTP, thereby preventing the formation of the 43S pre-initiation complex (43S PIC). This results in the global attenuation of 5' cap-dependent protein synthesis and concomitant translation of ISR-specific mRNAs that contain a short upstream open reading frame (uORF) in their 5' UTR, such as ATF4, ATF5, DDIT3/CHOP and PPP1R15A/GADD34. Functionally, member of the eIF2 complex that functions in the early steps of protein synthesis by forming a ternary complex with GTP and initiator tRNA. This complex binds to a 40S ribosomal subunit, followed by mRNA binding to form a 43S pre-initiation complex. Junction of the 60S ribosomal subunit to form the 80S initiation complex is preceded by hydrolysis of the GTP bound to eIF2 and release of an eIF2-GDP binary complex. In order for eIF2 to recycle and catalyze another round of initiation, the GDP bound to eIF2 must exchange with GTP by way of a reaction catalyzed by eIF2B. EIF2S1/eIF2-alpha is a key component of the integrated stress response (ISR), required for adaptation to various stress: phosphorylation by metabolic-stress sensing protein kinases (EIF2AK1/HRI, EIF2AK2/PKR, EIF2AK3/PERK and EIF2AK4/GCN2) in response to stress converts EIF2S1/eIF2-alpha in a global protein synthesis inhibitor, leading to a attenuation of cap-dependent translation, while concomitantly initiating the preferential translation of ISR-specific mRNAs, such as the transcriptional activators ATF4 and QRICH1, and hence allowing ATF4- and QRICH1-mediated reprogramming. EIF2S1/eIF2-alpha also acts as an activator of mitophagy in response to mitochondrial damage: phosphorylation by EIF2AK1/HRI promotes relocalization to the mitochondrial surface, thereby triggering PRKN-independent mitophagy. This Pongo abelii (Sumatran orangutan) protein is Eukaryotic translation initiation factor 2 subunit 1 (EIF2S1).